We begin with the raw amino-acid sequence, 1247 residues long: Probable phosphorylase b kinase regulatory subunit alpha (1247 aa).

Residues 853–883 (LKGLYEKACQQKLWGLVRHTAGMLGKRVEDL) are calmodulin-binding. 2 positions are modified to phosphoserine: S1030 and S1033. The segment at 1052–1089 (DRQGQWLRRRRLDGALNRVPRDFYSRVWTVLEKCQGLA) is calmodulin-binding. C1244 is lipidated: S-farnesyl cysteine.

Belongs to the phosphorylase b kinase regulatory chain family. Post-translationally, although the final Cys may be farnesylated, the terminal tripeptide is probably not removed, and the C-terminus is not methylated.

Its subcellular location is the cell membrane. The protein operates within glycan biosynthesis; glycogen metabolism. Functionally, phosphorylase b kinase catalyzes the phosphorylation of serine in certain substrates, including troponin I. The alpha chain may bind calmodulin. The chain is Probable phosphorylase b kinase regulatory subunit alpha from Drosophila melanogaster (Fruit fly).